Consider the following 281-residue polypeptide: CDAN1-interacting nuclease 1 (281 aa).

Threonine 114 carries the phosphothreonine modification.

The protein resides in the nucleus. Its subcellular location is the cytoplasm. Plays a role in erythroid cell differentiation. The protein is CDAN1-interacting nuclease 1 of Homo sapiens (Human).